We begin with the raw amino-acid sequence, 199 residues long: Recombination protein RecR (199 aa).

A C4-type zinc finger spans residues 57 to 72 (CQSCRTYTEETLCPIC). Residues 81-176 (STICVVETPA…MISRIAHGVP (96 aa)) enclose the Toprim domain.

The protein belongs to the RecR family.

Its function is as follows. May play a role in DNA repair. It seems to be involved in an RecBC-independent recombinational process of DNA repair. It may act with RecF and RecO. In Shewanella baltica (strain OS195), this protein is Recombination protein RecR.